The sequence spans 77 residues: Putative sulfur carrier protein AF_0188 (77 aa).

C11 (cysteine persulfide intermediate) is an active-site residue.

It belongs to the sulfur carrier protein TusA family.

This is Putative sulfur carrier protein AF_0188 from Archaeoglobus fulgidus (strain ATCC 49558 / DSM 4304 / JCM 9628 / NBRC 100126 / VC-16).